The chain runs to 625 residues: Histone promoter control protein 2 (625 aa).

Disordered regions lie at residues 1–164 (MDQK…FAAK) and 295–437 (APAE…VSPP). Low complexity predominate over residues 11 to 28 (SKSGSKQTKSSGKMQTQT). The segment covering 29–39 (DTNAEVLNTDN) has biased composition (polar residues). Serine 47 and serine 49 each carry phosphoserine. A compositionally biased stretch (low complexity) spans 83–105 (SPSPIIISGSSSTSPSGPSSSST). The segment covering 113–135 (NRFNKNTVELYQHSPSPVMTTNK) has biased composition (polar residues). Basic and acidic residues predominate over residues 136-154 (TDTEEKRQNNRNMDNKNTP). A compositionally biased stretch (polar residues) spans 155–164 (ERGSSSFAAK). 2 stretches are compositionally biased toward low complexity: residues 305–321 (SISSVTNSDSNISSSKK) and 330–355 (SSSASAILPKPTTTKTSKKAASNSSD). Composition is skewed to polar residues over residues 363–381 (SNKTTSAIKKESNAGSKLN) and 404–415 (GNSTEAKNSTSN). Serine 435 carries the phosphoserine modification.

Belongs to the HPC2 family. In terms of assembly, component of the HIR complex, composed of HIR1, HIR2, HIR3 and HPC2. This complex may consist of one copy of HIR1 and HIR3 and two copies of HIR2 and HPC2. The HIR complex interacts with ASF1. Interacts with RTT106.

It is found in the nucleus. It localises to the chromosome. In terms of biological role, component of the HIR complex, which functions as a histone chaperone that cooperates with ASF1 to promote replication-independent chromatin assembly. The HIR complex is also required for the periodic repression of three of the four histone gene loci during cell cycle as well as for autogenous regulation of the HTA1-HTB1 locus by H2A and H2B. DNA-binding by the HIR complex may repress transcription by inhibiting nucleosome remodeling by the SWI/SNF complex. The HIR complex may also be required for transcriptional silencing of centromeric, telomeric and mating-type loci in the absence of CAF-1. The protein is Histone promoter control protein 2 (HPC2) of Saccharomyces cerevisiae (strain ATCC 204508 / S288c) (Baker's yeast).